We begin with the raw amino-acid sequence, 251 residues long: Indole-3-glycerol phosphate synthase (251 aa).

Residues 1-12 (MDDSSSLASPVQ) show a composition bias toward polar residues. A disordered region spans residues 1 to 27 (MDDSSSLASPVQSILAAARRRDPPTRR).

The protein belongs to the TrpC family.

The enzyme catalyses 1-(2-carboxyphenylamino)-1-deoxy-D-ribulose 5-phosphate + H(+) = (1S,2R)-1-C-(indol-3-yl)glycerol 3-phosphate + CO2 + H2O. It functions in the pathway amino-acid biosynthesis; L-tryptophan biosynthesis; L-tryptophan from chorismate: step 4/5. This chain is Indole-3-glycerol phosphate synthase, found in Halobacterium salinarum (strain ATCC 700922 / JCM 11081 / NRC-1) (Halobacterium halobium).